The primary structure comprises 257 residues: Short-chain dehydrogenase reductase 3a (257 aa).

12-36 (IITGGASGIGAEAVRLFTDHGAKVV) lines the NAD(+) pocket. Substrate is bound at residue S144. The active-site Proton acceptor is Y157.

This sequence belongs to the short-chain dehydrogenases/reductases (SDR) family. In terms of tissue distribution, highly expressed in the radicle tip, lateral root primordia and tips, and the area surrounding the cotyledon hydathode of young seedlings.

In terms of biological role, confers resistance to the incompatible pathogenic bacteria P.syringae pv. tomato DC3000 in a PR1-dependent manner. Seems not involved in abscisic acid (ABA) biosynthesis. In Arabidopsis thaliana (Mouse-ear cress), this protein is Short-chain dehydrogenase reductase 3a (SDR3a).